Reading from the N-terminus, the 332-residue chain is Adenosine deaminase (332 aa).

The Zn(2+) site is built by histidine 12 and histidine 14. Substrate-binding residues include histidine 14, aspartate 16, and glycine 170. Histidine 197 contributes to the Zn(2+) binding site. Residue glutamate 200 is the Proton donor of the active site. Aspartate 278 lines the Zn(2+) pocket. Aspartate 279 serves as a coordination point for substrate.

This sequence belongs to the metallo-dependent hydrolases superfamily. Adenosine and AMP deaminases family. Adenosine deaminase subfamily. The cofactor is Zn(2+).

The catalysed reaction is adenosine + H2O + H(+) = inosine + NH4(+). It catalyses the reaction 2'-deoxyadenosine + H2O + H(+) = 2'-deoxyinosine + NH4(+). In terms of biological role, catalyzes the hydrolytic deamination of adenosine and 2-deoxyadenosine. The chain is Adenosine deaminase from Yersinia enterocolitica serotype O:8 / biotype 1B (strain NCTC 13174 / 8081).